Consider the following 152-residue polypeptide: Probable prefoldin subunit 5 (152 aa).

It belongs to the prefoldin subunit alpha family. As to quaternary structure, heterohexamer of two PFD-alpha type and four PFD-beta type subunits.

In terms of biological role, binds specifically to cytosolic chaperonin (c-CPN) and transfers target proteins to it. Binds to nascent polypeptide chain and promotes folding in an environment in which there are many competing pathways for nonnative proteins. This chain is Probable prefoldin subunit 5 (pfd-5), found in Caenorhabditis elegans.